The following is a 411-amino-acid chain: Phospholipase ABHD3 (411 aa).

Residues 25-45 (VGFFGSGVGLSLILGFSVAYA) form a helical; Signal-anchor for type II membrane protein membrane-spanning segment. The region spanning 140 to 233 (PTILLLPGLT…MLLLNYLGKI (94 aa)) is the AB hydrolase-1 domain. Residues serine 220, aspartate 346, and histidine 375 each act as charge relay system in the active site.

It belongs to the AB hydrolase superfamily. AB hydrolase 4 family. Widely expressed with higher expression in liver.

The protein resides in the membrane. It carries out the reaction a 1,2-diacyl-sn-glycero-3-phosphocholine + H2O = a 1-acyl-sn-glycero-3-phosphocholine + a fatty acid + H(+). The enzyme catalyses a 1,2-diacyl-sn-glycero-3-phosphocholine + H2O = a 2-acyl-sn-glycero-3-phosphocholine + a fatty acid + H(+). It catalyses the reaction 1-tetradecanoyl-2-(9Z,12Z-octadecadienoyl)-sn-glycero-3-phosphocholine + H2O = 2-(9Z,12Z-octadecadienoyl)-sn-glycero-3-phosphocholine + tetradecanoate + H(+). The catalysed reaction is 1-tetradecanoyl-2-(9Z,12Z-octadecadienoyl)-sn-glycero-3-phosphocholine + H2O = 1-tetradecanoyl-sn-glycero-3-phosphocholine + (9Z,12Z)-octadecadienoate + H(+). It carries out the reaction 1-tetradecanoyl-2-(5Z,8Z,11Z,14Z-eicosatetraenoyl)-sn-glycero-3-phosphocholine + H2O = 2-(5Z,8Z,11Z,14Z)-eicosatetraenoyl-sn-glycero-3-phosphocholine + tetradecanoate + H(+). The enzyme catalyses 1-tetradecanoyl-2-(4Z,7Z,10Z,13Z,16Z,19Z-docosahexaenoyl)-sn-glycero-3-phosphocholine + H2O = 2-(4Z,7Z,10Z,13Z,16Z,19Z-docosahexaenoyl)-sn-glycero-3-phosphocholine + tetradecanoate + H(+). It catalyses the reaction 1,2-ditetradecanoyl-sn-glycero-3-phosphocholine + H2O = 2-tetradecanoyl-sn-glycero-3-phosphocholine + tetradecanoate + H(+). The catalysed reaction is 1-octadecanoyl-2-acetyl-sn-glycero-3-phosphocholine + H2O = 1-octadecanoyl-sn-glycero-3-phosphocholine + acetate + H(+). It carries out the reaction 1,2-ditetradecanoyl-sn-glycero-3-phosphocholine + H2O = 1-tetradecanoyl-sn-glycero-3-phosphocholine + tetradecanoate + H(+). The enzyme catalyses 1-octadecanoyl-2-pentanoyl-sn-glycero-3-phosphocholine + H2O = pentanoate + 1-octadecanoyl-sn-glycero-3-phosphocholine + H(+). It catalyses the reaction 1-octadecanoyl-2-hexanoyl-sn-glycero-3-phosphocholine + H2O = hexanoate + 1-octadecanoyl-sn-glycero-3-phosphocholine + H(+). The catalysed reaction is 1-octadecanoyl-2-octanoyl-sn-glycero-3-phosphocholine + H2O = 1-octadecanoyl-sn-glycero-3-phosphocholine + octanoate + H(+). It carries out the reaction 1-octadecanoyl-2-nonanoyl-sn-glycero-3-phosphocholine + H2O = nonanoate + 1-octadecanoyl-sn-glycero-3-phosphocholine + H(+). The enzyme catalyses 1-O-hexadecyl-2-nonadioyl-sn-glycero-3-phosphocholine + H2O = nonanedioate + 1-O-hexadecyl-sn-glycero-3-phosphocholine + H(+). It catalyses the reaction 1-hexadecanoyl-2-nonadioyl-sn-glycero-3-phosphocholine + H2O = nonanedioate + 1-hexadecanoyl-sn-glycero-3-phosphocholine + H(+). The catalysed reaction is 1-hexadecanoyl-2-(9-oxononanoyl)-sn-glycero-3-phosphocholine + H2O = 9-oxononanoate + 1-hexadecanoyl-sn-glycero-3-phosphocholine + H(+). It carries out the reaction 1-hexadecanoyl-2-(5-oxopentanoyl)-sn-glycero-3-phosphocholine + H2O = 5-oxopentanoate + 1-hexadecanoyl-sn-glycero-3-phosphocholine + H(+). The enzyme catalyses 1-hexadecanoyl-2-glutaroyl-sn-glycero-3-phosphocholine + H2O = glutarate + 1-hexadecanoyl-sn-glycero-3-phosphocholine + H(+). It catalyses the reaction 1-O-hexadecyl-2-acetyl-sn-glycero-3-phosphocholine + H2O = 1-O-hexadecyl-sn-glycero-3-phosphocholine + acetate + H(+). Its function is as follows. Phospholipase that may play a role in phospholipids remodeling. May selectively cleave myristate (C14)-containing phosphatidylcholines through its predominant phospholipase 1 activity, cleaving preferentially acyl groups in sn1 position. In parallel, may have a minor phospholipase 2 activity acting on acyl groups in position sn2. In addition to (C14)-containing phosphatidylcholines, may also act on other medium-chain-containing and oxidatively truncated phospholipids. In Mus musculus (Mouse), this protein is Phospholipase ABHD3.